The following is a 272-amino-acid chain: NH(3)-dependent NAD(+) synthetase (272 aa).

Position 45 to 52 (45 to 52 (GISGGQDS)) interacts with ATP. Mg(2+) is bound at residue Asp-51. Arg-138 is a binding site for deamido-NAD(+). Thr-158 contacts ATP. Position 163 (Glu-163) interacts with Mg(2+). Lys-171 and Asp-178 together coordinate deamido-NAD(+). ATP-binding residues include Lys-187 and Thr-209. 258–259 (HK) serves as a coordination point for deamido-NAD(+).

Belongs to the NAD synthetase family. Homodimer.

The enzyme catalyses deamido-NAD(+) + NH4(+) + ATP = AMP + diphosphate + NAD(+) + H(+). The protein operates within cofactor biosynthesis; NAD(+) biosynthesis; NAD(+) from deamido-NAD(+) (ammonia route): step 1/1. Functionally, catalyzes the ATP-dependent amidation of deamido-NAD to form NAD. Uses ammonia as a nitrogen source. The polypeptide is NH(3)-dependent NAD(+) synthetase (Bacillus cereus (strain 03BB102)).